Here is a 221-residue protein sequence, read N- to C-terminus: Intraflagellar transport-associated protein (221 aa).

Serine 59 is modified (phosphoserine).

As to quaternary structure, interacts with IFT122; the interaction associates IFTAP with IFT-A complex.

Its function is as follows. Seems to play a role in ciliary BBSome localization, maybe through interaction with IFT-A complex. This Homo sapiens (Human) protein is Intraflagellar transport-associated protein.